The sequence spans 351 residues: Transcription factor Atoh1 (351 aa).

Disordered regions lie at residues leucine 16–leucine 39 and glutamate 89–proline 116. Over residues histidine 26–proline 36 the composition is skewed to pro residues. A bHLH domain is found at glutamine 156–leucine 208. Disordered regions lie at residues glycine 244–serine 278 and leucine 308–serine 351. Residues alanine 247–alanine 256 are compositionally biased toward low complexity. Pro residues predominate over residues glycine 258 to proline 268. The segment covering histidine 332–serine 351 has biased composition (basic and acidic residues).

In terms of assembly, efficient DNA binding requires dimerization with another bHLH protein. In terms of tissue distribution, developing nervous system, and in adult epithelial cells of the gastrointestinal tract.

Its subcellular location is the nucleus. In terms of biological role, transcriptional regulator. Activates E box-dependent transcription in collaboration with TCF3/E47, but the activity is completely antagonized by the negative regulator of neurogenesis HES1. Plays a role in the differentiation of subsets of neural cells by activating E box-dependent transcription. The protein is Transcription factor Atoh1 of Mus musculus (Mouse).